A 71-amino-acid polypeptide reads, in one-letter code: Protein CYSTEINE-RICH TRANSMEMBRANE MODULE 3 (71 aa).

Residues 30–49 (VMMKDSPQTVQPPHEGQSKG) form a disordered region. The helical transmembrane segment at 48 to 64 (KGSGGFLRGCLAAMCCC) threads the bilayer.

This sequence belongs to the CYSTM1 family. As to quaternary structure, heterodimers. Interacts with CYSTM7 and WIH1/CYSTM13. As to expression, mostly expressed in leaves and flowers and, to a lower extent, in stems, siliques, shoots and roots.

The protein resides in the cell membrane. The protein localises to the cytoplasm. Its subcellular location is the mitochondrion. Negatively regulates salt stress responses and Na(+) homeostasis. Prevents Na(+) efflux, disturbs reactive oxygen species (ROS) homeostasis, and represses the expression of nuclear salt stress-responsive genes. Involved in resistance to abiotic stress. This is Protein CYSTEINE-RICH TRANSMEMBRANE MODULE 3 from Arabidopsis thaliana (Mouse-ear cress).